Reading from the N-terminus, the 212-residue chain is Ribosomal RNA large subunit methyltransferase E (212 aa).

Gly-57, Trp-59, Asp-77, Asp-93, and Asp-122 together coordinate S-adenosyl-L-methionine. The Proton acceptor role is filled by Lys-162.

The protein belongs to the class I-like SAM-binding methyltransferase superfamily. RNA methyltransferase RlmE family.

Its subcellular location is the cytoplasm. The enzyme catalyses uridine(2552) in 23S rRNA + S-adenosyl-L-methionine = 2'-O-methyluridine(2552) in 23S rRNA + S-adenosyl-L-homocysteine + H(+). Specifically methylates the uridine in position 2552 of 23S rRNA at the 2'-O position of the ribose in the fully assembled 50S ribosomal subunit. This chain is Ribosomal RNA large subunit methyltransferase E, found in Coxiella burnetii (strain RSA 493 / Nine Mile phase I).